The chain runs to 36 residues: Mating hormone A-factor 1 (36 aa).

A propeptide spanning residues 1–21 (MQPSTATAAPKEKTSSEKKDN) is cleaved from the precursor. At cysteine 33 the chain carries Cysteine methyl ester. Cysteine 33 carries S-farnesyl cysteine lipidation. Positions 34–36 (VIA) are cleaved as a propeptide — removed in mature form.

The protein resides in the cell membrane. The active factor is excreted into the culture medium by haploid cells of the A mating type and acts on cells of the opposite mating type (type alpha). It mediates the conjugation process between the two types by inhibiting the initiation of DNA synthesis in type alpha cells and synchronizing them with type A. The sequence is that of Mating hormone A-factor 1 (MFA1) from Saccharomyces cerevisiae (strain ATCC 204508 / S288c) (Baker's yeast).